The sequence spans 324 residues: Delta-aminolevulinic acid dehydratase (324 aa).

3 residues coordinate Zn(2+): Cys118, Cys120, and Cys128. Lys195 acts as the Schiff-base intermediate with substrate in catalysis. Residues Arg205 and Arg217 each contribute to the 5-aminolevulinate site. A Mg(2+)-binding site is contributed by Glu233. Lys248 (schiff-base intermediate with substrate) is an active-site residue. Ser274 and Tyr313 together coordinate 5-aminolevulinate.

The protein belongs to the ALAD family. As to quaternary structure, homooctamer. It depends on Zn(2+) as a cofactor.

The enzyme catalyses 2 5-aminolevulinate = porphobilinogen + 2 H2O + H(+). It participates in porphyrin-containing compound metabolism; protoporphyrin-IX biosynthesis; coproporphyrinogen-III from 5-aminolevulinate: step 1/4. In terms of biological role, catalyzes an early step in the biosynthesis of tetrapyrroles. Binds two molecules of 5-aminolevulinate per subunit, each at a distinct site, and catalyzes their condensation to form porphobilinogen. The sequence is that of Delta-aminolevulinic acid dehydratase (hemB) from Staphylococcus epidermidis (strain ATCC 12228 / FDA PCI 1200).